The chain runs to 195 residues: Neurensin-1 (195 aa).

2 helical membrane-spanning segments follow: residues 66–86 and 120–140; these read LISG…GFLV and AVLF…SVFV.

Belongs to the VMP family. Expressed in brain. Not detectable in other tissues tested.

The protein resides in the membrane. The protein localises to the cell projection. It localises to the neuron projection. Functionally, may play an important role in neural organelle transport, and in transduction of nerve signals or in nerve growth. May play a role in neurite extension. May play a role in memory consolidation. In Homo sapiens (Human), this protein is Neurensin-1.